The following is a 244-amino-acid chain: Probable transcriptional regulatory protein XfasM23_0940 (244 aa).

This sequence belongs to the TACO1 family.

The protein resides in the cytoplasm. This is Probable transcriptional regulatory protein XfasM23_0940 from Xylella fastidiosa (strain M23).